The sequence spans 247 residues: MADS-box protein defh21 (247 aa).

Positions 1 to 61 (MGRGKIEVKR…GKLTEYCTPP (61 aa)) constitute an MADS-box domain. In terms of domain architecture, K-box spans 91–183 (NDQVIKELTR…WLMSNQIQRQ (93 aa)).

As to expression, expressed exclusively in a few inner cell layers of the inner integuments of the ovules.

It is found in the nucleus. Functionally, probable transcription factor. In Antirrhinum majus (Garden snapdragon), this protein is MADS-box protein defh21 (DEFH21).